We begin with the raw amino-acid sequence, 424 residues long: Serine hydroxymethyltransferase (424 aa).

Residues L126 and 130–132 contribute to the (6S)-5,6,7,8-tetrahydrofolate site; that span reads GHL. An N6-(pyridoxal phosphate)lysine modification is found at K235. Residue 359-361 coordinates (6S)-5,6,7,8-tetrahydrofolate; sequence SPF.

Belongs to the SHMT family. In terms of assembly, homodimer. The cofactor is pyridoxal 5'-phosphate.

It is found in the cytoplasm. It carries out the reaction (6R)-5,10-methylene-5,6,7,8-tetrahydrofolate + glycine + H2O = (6S)-5,6,7,8-tetrahydrofolate + L-serine. It functions in the pathway one-carbon metabolism; tetrahydrofolate interconversion. It participates in amino-acid biosynthesis; glycine biosynthesis; glycine from L-serine: step 1/1. Catalyzes the reversible interconversion of serine and glycine with tetrahydrofolate (THF) serving as the one-carbon carrier. This reaction serves as the major source of one-carbon groups required for the biosynthesis of purines, thymidylate, methionine, and other important biomolecules. Also exhibits THF-independent aldolase activity toward beta-hydroxyamino acids, producing glycine and aldehydes, via a retro-aldol mechanism. In Prochlorococcus marinus (strain MIT 9303), this protein is Serine hydroxymethyltransferase.